A 215-amino-acid polypeptide reads, in one-letter code: Large ribosomal subunit protein uL1 (215 aa).

The protein belongs to the universal ribosomal protein uL1 family. As to quaternary structure, part of the 50S ribosomal subunit.

Its function is as follows. Binds directly to 23S rRNA. Probably involved in E site tRNA release. Functionally, protein L1 is also a translational repressor protein, it controls the translation of its operon by binding to its mRNA. The sequence is that of Large ribosomal subunit protein uL1 from Staphylothermus marinus (strain ATCC 43588 / DSM 3639 / JCM 9404 / F1).